A 247-amino-acid polypeptide reads, in one-letter code: MAGHSKWANIKFRKGVQDAKRGKIFTKLIREITVAARMGGGDESSNPRLRDAVKKALNANMKRDTIDNAVKRGVGGADGEAMIAMRYEGYGPGGVAILVDCLSDNKNRTVSEVRHAFSKHGGNLGTDGSVSYLFTNQGEILMASNQPEDKVMEIAIDAGASDVAVEDSQVEIITPVEAYHTVLNALQDAGLEVEQSHLTMRAQTLVPISDETAESLIKLIDMLEDLDDVQEVYSNAEFSEKILESMN.

Belongs to the TACO1 family.

It is found in the cytoplasm. This chain is Probable transcriptional regulatory protein LPC_0711, found in Legionella pneumophila (strain Corby).